The sequence spans 273 residues: Large ribosomal subunit protein uL2c (273 aa).

Disordered stretches follow at residues glutamate 30–glycine 55 and glycine 222–arginine 243. The span at asparagine 45–glycine 55 shows a compositional bias: basic residues.

The protein belongs to the universal ribosomal protein uL2 family. In terms of assembly, part of the 50S ribosomal subunit.

It is found in the plastid. This Prototheca wickerhamii protein is Large ribosomal subunit protein uL2c (rpl2).